Reading from the N-terminus, the 874-residue chain is Endothelial PAS domain-containing protein 1 (874 aa).

The disordered stretch occupies residues 1 to 23 (MTADKEKKRSSSELRKEKSRDAA). The bHLH domain occupies 14–67 (LRKEKSRDAARCRRSKETEVFYELAHELPLPHSVSSHLDKASIMRLAISFLRTH). The tract at residues 26 to 53 (RRSKETEVFYELAHELPLPHSVSSHLDK) is DNA-binding. Residues 84-154 (DQQMDNLYLK…ENLTLKNGSG (71 aa)) enclose the PAS 1 domain. The interval 171-192 (RMKCTVTNRGRTVNLKSATWKV) is required for heterodimer formation with ARNT. A PAS 2 domain is found at 230–300 (QHPSHMDIPL…KSHQNLCTKG (71 aa)). Residues 304 to 347 (SGQYRMLAKHGGYVWLETQGTVIYNPRNLQPQCIMCVNYVLSEI) form the PAC domain. The residue at position 405 (Pro-405) is a 4-hydroxyproline. Residues 438–489 (WVSGLRSHSAQSESGSLPAFTVPQADTPGNTTPSASSSSSCSTPSSPEDYYS) are disordered. Positions 443 to 452 (RSHSAQSESG) are enriched in polar residues. A compositionally biased stretch (low complexity) spans 464-484 (TPGNTTPSASSSSSCSTPSSP). The NTAD stretch occupies residues 495 to 541 (LKIEVIEKLFAMDTEPRDPGSTQTDFSELDLETLAPYIPMDGEDFQL). 4-hydroxyproline is present on Pro-530. A disordered region spans residues 777-803 (LGQPLRHLPPPQPPSTRSSGENAKTGF). The tract at residues 834-874 (SFEPYLLPELTRYDCEVNVPVPGSSTLLQGRDLLRALDQAT) is CTAD. Position 844 is a phosphothreonine (Thr-844). Asn-851 is modified ((3S)-3-hydroxyasparagine).

As to quaternary structure, interacts with HIF3A isoform 2. Efficient DNA binding requires dimerization with another bHLH protein. Heterodimerizes with ARNT; heterodimer binds to core DNA sequence 5'-TACGTG-3' within the hypoxia response element (HRE) of target gene promoters. Interacts with CREBBP. Interacts with EGLN1. Interacts with VHL. Post-translationally, in normoxia, is probably hydroxylated on Pro-405 and Pro-530 by EGLN1/PHD1, EGLN2/PHD2 and/or EGLN3/PHD3. The hydroxylated prolines promote interaction with VHL, initiating rapid ubiquitination and subsequent proteasomal degradation. Under hypoxia, proline hydroxylation is impaired and ubiquitination is attenuated, resulting in stabilization. In terms of processing, in normoxia, is hydroxylated on Asn-851 by HIF1AN thus probably abrogating interaction with CREBBP and EP300 and preventing transcriptional activation. Phosphorylated on multiple sites in the CTAD. Post-translationally, the iron and 2-oxoglutarate dependent 3-hydroxylation of asparagine is (S) stereospecific within HIF CTAD domains. As to expression, expressed in most tissues, with highest levels in lung, followed by heart, kidney, brain and liver. Predominantly expressed in endothelial cells. Also found in smooth muscle cells of the uterus, neurons, and brown adipose tissue. High expression in embryonic choroid plexus and kidney glomeruli.

Its subcellular location is the nucleus. It localises to the nucleus speckle. Its function is as follows. Transcription factor involved in the induction of oxygen regulated genes. Heterodimerizes with ARNT; heterodimer binds to core DNA sequence 5'-TACGTG-3' within the hypoxia response element (HRE) of target gene promoters. Regulates the vascular endothelial growth factor (VEGF) expression and seems to be implicated in the development of blood vessels and the tubular system of lung. May also play a role in the formation of the endothelium that gives rise to the blood brain barrier. Potent activator of the Tie-2 tyrosine kinase expression. Activation requires recruitment of transcriptional coactivators such as CREBBP and probably EP300. Interaction with redox regulatory protein APEX seems to activate CTAD. In Mus musculus (Mouse), this protein is Endothelial PAS domain-containing protein 1 (Epas1).